The primary structure comprises 117 residues: Large ribosomal subunit protein bL20 (117 aa).

It belongs to the bacterial ribosomal protein bL20 family.

Functionally, binds directly to 23S ribosomal RNA and is necessary for the in vitro assembly process of the 50S ribosomal subunit. It is not involved in the protein synthesizing functions of that subunit. The protein is Large ribosomal subunit protein bL20 of Rickettsia rickettsii (strain Iowa).